We begin with the raw amino-acid sequence, 386 residues long: Succinate--CoA ligase [ADP-forming] subunit beta (386 aa).

The region spanning 9 to 244 (KEILRSFGVP…LDEEDPAEVE (236 aa)) is the ATP-grasp domain. ATP contacts are provided by residues K46, 53–55 (GRG), E99, A102, and E107. Mg(2+) contacts are provided by N199 and D213. Substrate contacts are provided by residues N264 and 321–323 (GIM).

Belongs to the succinate/malate CoA ligase beta subunit family. Heterotetramer of two alpha and two beta subunits. Requires Mg(2+) as cofactor.

It catalyses the reaction succinate + ATP + CoA = succinyl-CoA + ADP + phosphate. The catalysed reaction is GTP + succinate + CoA = succinyl-CoA + GDP + phosphate. Its pathway is carbohydrate metabolism; tricarboxylic acid cycle; succinate from succinyl-CoA (ligase route): step 1/1. Succinyl-CoA synthetase functions in the citric acid cycle (TCA), coupling the hydrolysis of succinyl-CoA to the synthesis of either ATP or GTP and thus represents the only step of substrate-level phosphorylation in the TCA. The beta subunit provides nucleotide specificity of the enzyme and binds the substrate succinate, while the binding sites for coenzyme A and phosphate are found in the alpha subunit. The protein is Succinate--CoA ligase [ADP-forming] subunit beta of Acidovorax ebreus (strain TPSY) (Diaphorobacter sp. (strain TPSY)).